Consider the following 529-residue polypeptide: MQLPVQLSSPLALAVLSIATCQLALVWWYQRKRTNPLPPGPSALPFLGNAHQIPLQYPERIFSQWARTYGGVMYLRLFKKSVLILDSVKAAQDLMDKRGAKFSDRPQLTLITDVFAFKPMMFTMPYGDLWRRHRKWYQASLESKAALDTYNAVQEMETCTLLSALVSDSEHFADQVKRFTGAILLEIVYGHAVTSVKDDLIRLSDEMMTQAVSAGSLVATLLDFFPFLMHIPEWFPGGGFKREGARVRHLMRQLLDVPFNEVQQAMLEGSGKACLTTYMLEEQAEHGDLTPDDVDNIKGAATLLFIAGTDTTITTLLTFFLAMVLHPEVVHKAQAEIDRVVGRTRLPSLMDRDALPYLDQVLKEVYRWNPPVPLGIPHQVRDDDVYNGRHIPGGSMVVSNIWSMSRDPDTYEDADRFWPERYEGKSSDELARSDPRRIVYGFGRRLCPGRFLADSSIWLAAARVIATLDIRKVLDAEGKEMTPSAEFISGAVSHPKPFSLDILPRDEVAAKLIAQLDPNHLFSVQGEAI.

The helical transmembrane segment at 9-29 (SPLALAVLSIATCQLALVWWY) threads the bilayer. Residue Cys-447 coordinates heme.

The protein belongs to the cytochrome P450 family. Heme serves as cofactor.

Its subcellular location is the membrane. The protein operates within secondary metabolite biosynthesis. Functionally, cytochrome P450 monooxygenase that is able to use delta(6)-protoilludene as a substrate to produce delta(6)-protoilludene-5-ol. This is Cytochrome P450 monooxygenase 136 from Postia placenta (strain ATCC 44394 / Madison 698-R) (Brown rot fungus).